We begin with the raw amino-acid sequence, 248 residues long: MKGLKGLLVLALGFTGLQVFGQQNPDIKIEKLKDNLYVYTTYNTFKGTKYAANAVYMVTDKGIVVIDSPWGEDKFKSFTDEIYKKHGKKVIMNIATHSHDDRAGGLEYFGKLGAKTYSTKMTDSILAKENKPRAKYTFDNNKSFKVGKTEFQVYYPGKGHTADNVVVWFPKDKVLVGGCIVKSGDSKDLGFIGEAYVNDWTQSIHNIQQKFPDVQYVVAGHDDWKDQTSIQHTLDLISEYQQKQKASN.

The N-terminal stretch at 1–21 is a signal peptide; that stretch reads MKGLKGLLVLALGFTGLQVFG. The Zn(2+) site is built by H97, H99, D101, H160, and C179. K182 is a substrate binding site. Residue H221 participates in Zn(2+) binding.

This sequence belongs to the metallo-beta-lactamase superfamily. Class-B beta-lactamase family. As to quaternary structure, monomer. It depends on Zn(2+) as a cofactor.

The protein localises to the periplasm. It catalyses the reaction a beta-lactam + H2O = a substituted beta-amino acid. Its function is as follows. Confers resistance to the different beta-lactams antibiotics (penicillin, cephalosporin and carbapenem) via the hydrolysis of the beta-lactam ring. This is Metallo-beta-lactamase type 2 (blaB7) from Elizabethkingia meningoseptica (Chryseobacterium meningosepticum).